A 504-amino-acid polypeptide reads, in one-letter code: Maturase K (504 aa).

It belongs to the intron maturase 2 family. MatK subfamily.

It localises to the plastid. It is found in the chloroplast. Its function is as follows. Usually encoded in the trnK tRNA gene intron. Probably assists in splicing its own and other chloroplast group II introns. The chain is Maturase K from Adenostoma fasciculatum (Chamise).